A 136-amino-acid polypeptide reads, in one-letter code: Keratin-associated protein 9-3 (136 aa).

A run of 11 repeats spans residues 3 to 7 (CCATS), 21 to 25 (CCQPT), 31 to 35 (CCQPS), 36 to 40 (CCEAS), 41 to 45 (CCQPS), 46 to 50 (CCETG), 87 to 91 (CCVVS), 97 to 101 (CCQLH), 107 to 111 (CCRPS), 117 to 121 (CCRPA), and 126 to 130 (CCQPS). The tract at residues 21-130 (CCQPTCTQSS…ACCCYCCQPS (110 aa)) is 11 X 5 AA repeats of C-C-[AEQVR]-[ALPTV]-[AGHST].

It belongs to the KRTAP type 9 family. Interacts with hair keratins.

In the hair cortex, hair keratin intermediate filaments are embedded in an interfilamentous matrix, consisting of hair keratin-associated proteins (KRTAP), which are essential for the formation of a rigid and resistant hair shaft through their extensive disulfide bond cross-linking with abundant cysteine residues of hair keratins. The matrix proteins include the high-sulfur and high-glycine-tyrosine keratins. The sequence is that of Keratin-associated protein 9-3 from Mus musculus (Mouse).